Here is a 62-residue protein sequence, read N- to C-terminus: Beta-defensin 110 (62 aa).

The signal sequence occupies residues 1-21 (MKIHLFFFILLFWVTILPARS). Cystine bridges form between C32/C60, C39/C53, and C43/C61.

The protein belongs to the beta-defensin family.

It localises to the secreted. Has antibacterial activity. This is Beta-defensin 110 (DEFB110) from Canis lupus familiaris (Dog).